Consider the following 161-residue polypeptide: Large ribosomal subunit protein uL11 (161 aa).

It belongs to the universal ribosomal protein uL11 family. In terms of assembly, part of the ribosomal stalk of the 50S ribosomal subunit. Interacts with L10 and the large rRNA to form the base of the stalk. L10 forms an elongated spine to which L12 dimers bind in a sequential fashion forming a multimeric L10(L12)X complex.

Forms part of the ribosomal stalk which helps the ribosome interact with GTP-bound translation factors. This Methanosarcina barkeri (strain Fusaro / DSM 804) protein is Large ribosomal subunit protein uL11.